We begin with the raw amino-acid sequence, 253 residues long: Transcriptional regulatory protein TcrA (253 aa).

The Response regulatory domain occupies R24–S138. Position 73 is a 4-aspartylphosphate (D73). The segment at residues P146–K244 is a DNA-binding region (ompR/PhoB-type).

As to quaternary structure, interacts with HK2. Phosphorylated by HK2.

It localises to the cytoplasm. Its function is as follows. Member of the three-protein two-component system HK1/HK2/TcrA. This chain is Transcriptional regulatory protein TcrA (tcrA), found in Mycobacterium tuberculosis (strain ATCC 25618 / H37Rv).